A 222-amino-acid chain; its full sequence is uncharacterized protein (222 aa).

The HTH gntR-type domain occupies 8-77 (AKKNQIIYRY…NTPGYFVCKD (70 aa)).

This is an uncharacterized protein from Mycoplasma genitalium (strain ATCC 33530 / DSM 19775 / NCTC 10195 / G37) (Mycoplasmoides genitalium).